The sequence spans 513 residues: Exoglucanase 1 (513 aa).

A signal peptide spans Met-1–Ala-17. Gln-18 carries the pyrrolidone carboxylic acid modification. The catalytic stretch occupies residues Gln-18 to Asn-453. 10 cysteine pairs are disulfide-bonded: Cys-21–Cys-89, Cys-36–Cys-42, Cys-67–Cys-88, Cys-78–Cys-84, Cys-155–Cys-414, Cys-189–Cys-227, Cys-193–Cys-226, Cys-247–Cys-273, Cys-255–Cys-260, and Cys-278–Cys-348. Asn-62 is a glycosylation site (N-linked (GlcNAc) asparagine). Residue Glu-229 is the Nucleophile of the active site. Glu-234 (proton donor/acceptor) is an active-site residue. N-linked (GlcNAc) asparagine glycans are attached at residues Asn-287 and Asn-401. Residues Asn-401 to Asn-437 show a composition bias toward polar residues. A disordered region spans residues Asn-401–Ser-480. Residues Pro-449–Arg-459 are compositionally biased toward gly residues. Positions Pro-454 to Pro-477 are linker. Low complexity predominate over residues Gly-460 to Thr-478. Thr-461 carries an O-linked (Man) threonine glycan. Thr-462, Thr-463, and Thr-464 each carry an O-linked (Man...) threonine glycan. The O-linked (Man) threonine glycan is linked to Thr-469. O-linked (Man...) threonine glycosylation is found at Thr-470 and Thr-471. O-linked (Man) serine glycosylation is found at Ser-473 and Ser-474. Residues Pro-477–Leu-513 form the CBM1 domain. Thr-478 is a glycosylation site (O-linked (Man) threonine). O-linked (Man) serine glycosylation is found at Ser-480 and Ser-491. Cystine bridges form between Cys-485–Cys-502 and Cys-496–Cys-512.

It belongs to the glycosyl hydrolase 7 (cellulase C) family. In terms of processing, N-glycosylated. The catalytic core domain comprises three N-linked glycans which each consist of a single N-acetylglucosamine residue. Post-translationally, O-glycosylated. Within the linker domain, all 8 threonines are variably glycosylated with between at least one, and up to three, mannose residues per site. All serines in this domain are at least partially glycosylated with a single mannose residue. O-glycosylation of the cellulase linker provides protection from proteolysis. Linker glycans also contribute to binding affinity of cellobiohydrolases to cellulose.

Its subcellular location is the secreted. The catalysed reaction is Hydrolysis of (1-&gt;4)-beta-D-glucosidic linkages in cellulose and cellotetraose, releasing cellobiose from the non-reducing ends of the chains.. Exocellobiohydrolases (CBH) that catalyzes the hydrolysis of 1,4-beta-D-glucosidic bonds in cellulose to release the disaccharide cellobiose. The degradation of cellulose involves an interplay between different cellulolytic enzymes. Hydrolysis starts with endoglucanases (EGs), which cut internal beta-1,4-glucosidic bonds in cellulose to reduce the polymerization degree of the substrate and create new chain ends for exocellobiohydrolases (CBHs). The CBHs release the disaccharide cellobiose from the non-reducing end of the cellulose polymer chain. Finally, beta-1,4-glucosidases hydrolyze the cellobiose and other short cello-oligosaccharides into glucose units. The chain is Exoglucanase 1 (cbh1) from Hypocrea jecorina (Trichoderma reesei).